We begin with the raw amino-acid sequence, 382 residues long: V-type proton ATPase subunit C 1 (382 aa).

N-acetylthreonine is present on T2.

It belongs to the V-ATPase C subunit family. In terms of assembly, V-ATPase is a heteromultimeric enzyme made up of two complexes: the ATP-hydrolytic V1 complex and the proton translocation V0 complex. The V1 complex consists of three catalytic AB heterodimers that form a heterohexamer, three peripheral stalks each consisting of EG heterodimers, one central rotor including subunits D and F, and the regulatory subunits C and H. The proton translocation complex V0 consists of the proton transport subunit a, a ring of proteolipid subunits c9c'', rotary subunit d, subunits e and f, and the accessory subunits ATP6AP1/Ac45 and ATP6AP2/PRR. Expressed in brain (at protein level).

It localises to the cytoplasmic vesicle. Its subcellular location is the secretory vesicle. It is found in the synaptic vesicle membrane. The protein resides in the clathrin-coated vesicle membrane. Functionally, subunit of the V1 complex of vacuolar(H+)-ATPase (V-ATPase), a multisubunit enzyme composed of a peripheral complex (V1) that hydrolyzes ATP and a membrane integral complex (V0) that translocates protons. V-ATPase is responsible for acidifying and maintaining the pH of intracellular compartments and in some cell types, is targeted to the plasma membrane, where it is responsible for acidifying the extracellular environment. Subunit C is necessary for the assembly of the catalytic sector of the enzyme and is likely to have a specific function in its catalytic activity. This chain is V-type proton ATPase subunit C 1 (Atp6v1c1), found in Rattus norvegicus (Rat).